A 121-amino-acid chain; its full sequence is Ribonuclease P protein component (121 aa).

Belongs to the RnpA family. As to quaternary structure, consists of a catalytic RNA component (M1 or rnpB) and a protein subunit.

It carries out the reaction Endonucleolytic cleavage of RNA, removing 5'-extranucleotides from tRNA precursor.. RNaseP catalyzes the removal of the 5'-leader sequence from pre-tRNA to produce the mature 5'-terminus. It can also cleave other RNA substrates such as 4.5S RNA. The protein component plays an auxiliary but essential role in vivo by binding to the 5'-leader sequence and broadening the substrate specificity of the ribozyme. The polypeptide is Ribonuclease P protein component (Rickettsia prowazekii (strain Madrid E)).